The sequence spans 373 residues: Transmembrane protein adipocyte-associated 1 (373 aa).

N-linked (GlcNAc...) asparagine glycosylation is found at asparagine 11 and asparagine 23. 7 helical membrane passes run 48 to 68 (LLLL…LPSA), 76 to 96 (SSPI…VGIA), 123 to 143 (FFLL…GHLE), 151 to 171 (VLAI…TLEI), 192 to 212 (QFWL…VILP), 234 to 254 (ILAL…FDII), and 265 to 285 (FLYF…GFFG). Residue asparagine 361 is glycosylated (N-linked (GlcNAc...) asparagine).

The protein belongs to the UPF0359 family. As to expression, ubiquitous, with higher levels in heart, placenta and kidney.

The protein localises to the membrane. This chain is Transmembrane protein adipocyte-associated 1 (TPRA1), found in Homo sapiens (Human).